The following is a 501-amino-acid chain: Probable cytosol aminopeptidase (501 aa).

Mn(2+)-binding residues include Lys-268 and Asp-273. The active site involves Lys-280. Residues Asp-291, Asp-350, and Glu-352 each coordinate Mn(2+). Arg-354 is an active-site residue.

The protein belongs to the peptidase M17 family. The cofactor is Mn(2+).

The protein resides in the cytoplasm. The enzyme catalyses Release of an N-terminal amino acid, Xaa-|-Yaa-, in which Xaa is preferably Leu, but may be other amino acids including Pro although not Arg or Lys, and Yaa may be Pro. Amino acid amides and methyl esters are also readily hydrolyzed, but rates on arylamides are exceedingly low.. It carries out the reaction Release of an N-terminal amino acid, preferentially leucine, but not glutamic or aspartic acids.. Functionally, presumably involved in the processing and regular turnover of intracellular proteins. Catalyzes the removal of unsubstituted N-terminal amino acids from various peptides. This Idiomarina loihiensis (strain ATCC BAA-735 / DSM 15497 / L2-TR) protein is Probable cytosol aminopeptidase.